The following is a 325-amino-acid chain: GMP reductase (325 aa).

The active-site Thioimidate intermediate is the Cys-173. 202-225 is an NADP(+) binding site; that stretch reads IIADGGIRDHGDIAKSVRFGASMV.

It belongs to the IMPDH/GMPR family. GuaC type 2 subfamily.

The catalysed reaction is IMP + NH4(+) + NADP(+) = GMP + NADPH + 2 H(+). Catalyzes the irreversible NADPH-dependent deamination of GMP to IMP. It functions in the conversion of nucleobase, nucleoside and nucleotide derivatives of G to A nucleotides, and in maintaining the intracellular balance of A and G nucleotides. The protein is GMP reductase of Variovorax paradoxus (strain S110).